A 251-amino-acid polypeptide reads, in one-letter code: Capsid protein (251 aa).

The Bipartite nuclear localization signal motif lies at 3–20; that stretch reads KRDLPWRSMAGTSKVSRN. Residues 35-49 carry the Nuclear localization signal motif; it reads KAAEWVNRPMYRKPR. The segment at 63–80 is a zinc-finger region; sequence CEGPCKVQSFEQRHDISH. The short motif at 96–117 is the Nuclear export signal element; it reads ITHRVGKRFCVKSVYILGKIWM. Positions 195-242 match the Bipartite nuclear localization signal motif; sequence KRFWKVNNHVVYNHQEAGKYENHTENALLLYMACTHASNPVYATLKIR.

Belongs to the geminiviridae capsid protein family. As to quaternary structure, homomultimer. Binds to single-stranded and double-stranded viral DNA. Interacts (via nuclear localization signals) with host importin alpha-1a.

The protein resides in the virion. It localises to the host nucleus. Encapsidates the viral DNA into characteristic twinned ('geminate') particles. Binds the genomic viral ssDNA and shuttles it into and out of the cell nucleus. The CP of bipartite geminiviruses is not required for cell-to-cell or systemic movement. This chain is Capsid protein, found in Tomato mottle virus (isolate Florida) (ToMoV).